The primary structure comprises 125 residues: 13 kDa ribonucleoprotein-associated protein (125 aa).

This sequence belongs to the eukaryotic ribosomal protein eL8 family. As to quaternary structure, component of the U3 snoRNP particle. Binds to the C'/D and B/C motifs in U3 snoRNA. Component of the 25S U4/U6.U5 tri-snRNP particle, a subcomplex of the spliceosome. Binds to the 5' stem-loop of U4 snRNA.

It localises to the nucleus. The protein resides in the nucleolus. In terms of biological role, common component of the spliceosome and rRNA processing machinery. In association with the spliceosomal U4/U6.U5 tri-snRNP particle, required for splicing of pre-mRNA. In association with box C/D snoRNPs, required for processing of pre-ribosomal RNA (rRNA) and site-specific 2'-O-methylation of substrate RNAs. Essential for the accumulation and stability of U4 snRNA, U6 snRNA, and box C/D snoRNAs. In Schizosaccharomyces pombe (strain 972 / ATCC 24843) (Fission yeast), this protein is 13 kDa ribonucleoprotein-associated protein (snu13).